The chain runs to 134 residues: Putative transposase InsN for insertion sequence element IS911A (134 aa).

Belongs to the transposase 8 family.

Involved in the transposition of the insertion sequence IS911. In Escherichia coli (strain K12), this protein is Putative transposase InsN for insertion sequence element IS911A (insN1).